Reading from the N-terminus, the 204-residue chain is Large ribosomal subunit protein uL3c (204 aa).

Residues 126–155 (HNFTRGPMTHGSKNHREPGSIGQGSTPAKV) form a disordered region.

Belongs to the universal ribosomal protein uL3 family. Part of the 50S ribosomal subunit.

The protein localises to the plastid. It localises to the chloroplast. Its function is as follows. One of the primary rRNA binding proteins, it binds directly near the 3'-end of the 23S rRNA, where it nucleates assembly of the 50S subunit. In Guillardia theta (Cryptophyte), this protein is Large ribosomal subunit protein uL3c (rpl3).